A 434-amino-acid chain; its full sequence is Trigger factor (434 aa).

A PPIase FKBP-type domain is found at Gly161–Pro246.

It belongs to the FKBP-type PPIase family. Tig subfamily.

Its subcellular location is the cytoplasm. It carries out the reaction [protein]-peptidylproline (omega=180) = [protein]-peptidylproline (omega=0). Involved in protein export. Acts as a chaperone by maintaining the newly synthesized protein in an open conformation. Functions as a peptidyl-prolyl cis-trans isomerase. This chain is Trigger factor, found in Vibrio parahaemolyticus serotype O3:K6 (strain RIMD 2210633).